A 341-amino-acid polypeptide reads, in one-letter code: tRNA N6-adenosine threonylcarbamoyltransferase (341 aa).

2 residues coordinate Fe cation: histidine 115 and histidine 119. Substrate contacts are provided by residues 137–141 (IVSGG), aspartate 170, glycine 183, aspartate 187, and asparagine 276. Residue aspartate 304 coordinates Fe cation.

It belongs to the KAE1 / TsaD family. Fe(2+) is required as a cofactor.

It is found in the cytoplasm. It catalyses the reaction L-threonylcarbamoyladenylate + adenosine(37) in tRNA = N(6)-L-threonylcarbamoyladenosine(37) in tRNA + AMP + H(+). Its function is as follows. Required for the formation of a threonylcarbamoyl group on adenosine at position 37 (t(6)A37) in tRNAs that read codons beginning with adenine. Is involved in the transfer of the threonylcarbamoyl moiety of threonylcarbamoyl-AMP (TC-AMP) to the N6 group of A37, together with TsaE and TsaB. TsaD likely plays a direct catalytic role in this reaction. This is tRNA N6-adenosine threonylcarbamoyltransferase from Staphylococcus aureus (strain bovine RF122 / ET3-1).